The sequence spans 209 residues: Response regulator protein VraR (209 aa).

Residues 4–120 (KVLFVDDHEM…DIADAVRKTY (117 aa)) enclose the Response regulatory domain. Aspartate 55 is modified (4-aspartylphosphate). Positions 141-206 (RAELYEMLTE…QAVIYAFQHN (66 aa)) constitute an HTH luxR-type domain. A DNA-binding region (H-T-H motif) is located at residues 165–184 (NQEIASASHITIKTVKTHVS).

Phosphorylated by VraS.

The protein resides in the cytoplasm. Member of the two-component regulatory system VraS/VraR involved in the control of the cell wall peptidoglycan biosynthesis. The polypeptide is Response regulator protein VraR (vraR) (Staphylococcus epidermidis (strain ATCC 35984 / DSM 28319 / BCRC 17069 / CCUG 31568 / BM 3577 / RP62A)).